The primary structure comprises 667 residues: Primary amine oxidase (667 aa).

Positions 1–18 are cleaved as a signal peptide; sequence KFALFSVLTLLSFHAVFS. Asparagine 149 is a glycosylation site (N-linked (GlcNAc...) asparagine). A disulfide bridge connects residues cysteine 155 and cysteine 176. The interval 216-246 is disordered; that stretch reads PTAENTEYQVSKQSPPFGPKQHSLTSHQPQG. Over residues 218–229 the composition is skewed to polar residues; that stretch reads AENTEYQVSKQS. Asparagine 252 carries an N-linked (GlcNAc...) asparagine glycan. Position 316–327 (316–327) interacts with substrate; it reads FFDSGEFGFGLS. Aspartate 318 (proton acceptor) is an active-site residue. Cysteine 337 and cysteine 363 form a disulfide bridge. The N-linked (GlcNAc...) asparagine glycan is linked to asparagine 382. A substrate-binding site is contributed by 402–407; that stretch reads VGNYDN. The active-site Schiff-base intermediate with substrate; via topaquinone is the tyrosine 405. Tyrosine 405 carries the post-translational modification 2',4',5'-topaquinone. Cu cation contacts are provided by histidine 460 and histidine 462. Positions 469, 470, and 471 each coordinate Mn(2+). Asparagine 576 carries an N-linked (GlcNAc...) asparagine glycan. The Mn(2+) site is built by aspartate 610 and isoleucine 611. Histidine 621 is a binding site for Cu cation.

The protein belongs to the copper/topaquinone oxidase family. In terms of assembly, homodimer. Cu cation is required as a cofactor. The cofactor is Zn(2+). Requires L-topaquinone as cofactor. Mn(2+) serves as cofactor. In terms of processing, glycosylated; contains two carbohydrate chains per monomer. Topaquinone (TPQ) is generated by copper-dependent autoxidation of a specific tyrosyl residue.

It carries out the reaction a primary methyl amine + O2 + H2O = an aldehyde + H2O2 + NH4(+). The polypeptide is Primary amine oxidase (Lens culinaris (Lentil)).